The primary structure comprises 339 residues: Pyrimidine monooxygenase RutA (339 aa).

FMN contacts are provided by residues 26-27 (IK), N92, E101, 117-118 (RY), and S167.

It belongs to the NtaA/SnaA/DszA monooxygenase family. RutA subfamily.

The enzyme catalyses uracil + FMNH2 + NADH + O2 = (Z)-3-ureidoacrylate + FMN + NAD(+) + H2O + H(+). It carries out the reaction thymine + FMNH2 + NADH + O2 = (Z)-2-methylureidoacrylate + FMN + NAD(+) + H2O + H(+). Catalyzes the pyrimidine ring opening between N-3 and C-4 by an unusual flavin hydroperoxide-catalyzed mechanism, adding oxygen atoms in the process to yield ureidoacrylate peracid, that immediately reacts with FMN forming ureidoacrylate and FMN-N(5)-oxide. The FMN-N(5)-oxide reacts spontaneously with NADH to produce FMN. Requires the flavin reductase RutF to regenerate FMN in vivo. In Cronobacter sakazakii (strain ATCC BAA-894) (Enterobacter sakazakii), this protein is Pyrimidine monooxygenase RutA.